The following is a 192-amino-acid chain: Ion-translocating oxidoreductase complex subunit B (192 aa).

Residues 1-26 (MNTIWIAVGALTLLGLVFGAILGYAS) form a hydrophobic region. Residues 32–91 (EDDPVVEKIDAILPQSQCGQCGYPGCRPYAEAVGLQGEKINRCAPGGEAVMLKMAELLNV) enclose the 4Fe-4S domain. Cys49, Cys52, Cys57, Cys74, Cys117, Cys120, Cys123, Cys127, Cys147, Cys150, Cys153, and Cys157 together coordinate [4Fe-4S] cluster. 4Fe-4S ferredoxin-type domains lie at 108-137 (MLAV…GATR) and 138-167 (AMHT…LRPV).

The protein belongs to the 4Fe4S bacterial-type ferredoxin family. RnfB subfamily. The complex is composed of six subunits: RsxA, RsxB, RsxC, RsxD, RsxE and RsxG. Requires [4Fe-4S] cluster as cofactor.

The protein localises to the cell inner membrane. Functionally, part of a membrane-bound complex that couples electron transfer with translocation of ions across the membrane. Required to maintain the reduced state of SoxR. The chain is Ion-translocating oxidoreductase complex subunit B from Salmonella agona (strain SL483).